The following is a 300-amino-acid chain: MDPTLLALGALALSGAAATVAGCAEDLESDVGSQSNPNSQVQLGPQMGNIHRYFNKAISGEPVSYGLYVAAAGATAWALMGMNLNPILAIIVGSAVAALVHGAYSVSAFLGRIVGQSKNFGQPVYMDVMMGHLGPIVGHGFIAVFCMLFAAYLAVNALGNPFPLPLVALIFGITVGAIGSSTGDVHYGAEREYQKYAFGGGIPVANQGDIDIMAETGIRNGLDSSYFCSKLGGPLTGLAFGLIIFLDGWRSILGNIIGGDLITKAAIAIVVGLIVVITTLLLNRKIEVYARNKFGPYTDR.

6 helical membrane-spanning segments follow: residues 62 to 82 (PVSYGLYVAAAGATAWALMGM), 86 to 106 (PILAIIVGSAVAALVHGAYSV), 135 to 155 (PIVGHGFIAVFCMLFAAYLAV), 158 to 178 (LGNPFPLPLVALIFGITVGAI), 226 to 246 (YFCSKLGGPLTGLAFGLIIFL), and 261 to 281 (LITKAAIAIVVGLIVVITTLL).

The protein belongs to the MtrE family. In terms of assembly, the complex is composed of 8 subunits; MtrA, MtrB, MtrC, MtrD, MtrE, MtrF, MtrG and MtrH.

The protein resides in the cell membrane. It carries out the reaction 5-methyl-5,6,7,8-tetrahydromethanopterin + coenzyme M + 2 Na(+)(in) = 5,6,7,8-tetrahydromethanopterin + methyl-coenzyme M + 2 Na(+)(out). It participates in one-carbon metabolism; methanogenesis from CO(2); methyl-coenzyme M from 5,10-methylene-5,6,7,8-tetrahydromethanopterin: step 2/2. Functionally, part of a complex that catalyzes the formation of methyl-coenzyme M and tetrahydromethanopterin from coenzyme M and methyl-tetrahydromethanopterin. This is an energy-conserving, sodium-ion translocating step. In Methanococcus aeolicus (strain ATCC BAA-1280 / DSM 17508 / OCM 812 / Nankai-3), this protein is Tetrahydromethanopterin S-methyltransferase subunit E.